The primary structure comprises 254 residues: uncharacterized protein (254 aa).

The next 8 helical transmembrane spans lie at 41 to 61, 64 to 84, 91 to 111, 125 to 145, 146 to 166, 172 to 192, 204 to 224, and 232 to 252; these read LFVF…IKII, ILQA…EYFF, IYCG…LYIL, LLIS…FVLA, PAAL…LWSF, FILL…IQLL, MIRA…ILTP, and LIMS…LLVL.

Belongs to the TatC family.

Its subcellular location is the plastid. It is found in the chloroplast membrane. This is an uncharacterized protein from Pyropia yezoensis (Susabi-nori).